Reading from the N-terminus, the 374-residue chain is Type IV secretion system protein PtlG homolog (374 aa).

A helical transmembrane segment spans residues 38–56 (WMFALVAVALSCLLATGIW). Residues 86 to 117 (HPREPEPAPLPDMPAAPDPILPQPRPAPPVPP) form a disordered region. Residues 92 to 117 (PAPLPDMPAAPDPILPQPRPAPPVPP) are compositionally biased toward pro residues.

The protein belongs to the TrbI/VirB10 family.

Its subcellular location is the cell membrane. This chain is Type IV secretion system protein PtlG homolog (ptlG), found in Bordetella bronchiseptica (strain ATCC BAA-588 / NCTC 13252 / RB50) (Alcaligenes bronchisepticus).